Consider the following 318-residue polypeptide: Biotin synthase (318 aa).

The Radical SAM core domain occupies 44 to 273 (LCGNKFDLCT…TVQIRLAGGR (230 aa)). Residues Cys-62, Cys-66, and Cys-69 each coordinate [4Fe-4S] cluster. [2Fe-2S] cluster-binding residues include Ser-106, Cys-138, Cys-198, and Arg-268.

Belongs to the radical SAM superfamily. Biotin synthase family. Homodimer. [4Fe-4S] cluster is required as a cofactor. Requires [2Fe-2S] cluster as cofactor.

It carries out the reaction (4R,5S)-dethiobiotin + (sulfur carrier)-SH + 2 reduced [2Fe-2S]-[ferredoxin] + 2 S-adenosyl-L-methionine = (sulfur carrier)-H + biotin + 2 5'-deoxyadenosine + 2 L-methionine + 2 oxidized [2Fe-2S]-[ferredoxin]. Its pathway is cofactor biosynthesis; biotin biosynthesis; biotin from 7,8-diaminononanoate: step 2/2. Its function is as follows. Catalyzes the conversion of dethiobiotin (DTB) to biotin by the insertion of a sulfur atom into dethiobiotin via a radical-based mechanism. The sequence is that of Biotin synthase from Clostridium botulinum (strain Hall / ATCC 3502 / NCTC 13319 / Type A).